The sequence spans 807 residues: Glycerol-3-phosphate acyltransferase (807 aa).

The HXXXXD motif signature appears at 308–313 (CHRSHM).

It belongs to the GPAT/DAPAT family.

Its subcellular location is the cell inner membrane. It catalyses the reaction sn-glycerol 3-phosphate + an acyl-CoA = a 1-acyl-sn-glycero-3-phosphate + CoA. The protein operates within phospholipid metabolism; CDP-diacylglycerol biosynthesis; CDP-diacylglycerol from sn-glycerol 3-phosphate: step 1/3. This chain is Glycerol-3-phosphate acyltransferase, found in Shewanella sp. (strain W3-18-1).